We begin with the raw amino-acid sequence, 338 residues long: 1-aminocyclopropane-1-carboxylate deaminase (338 aa).

Residue Lys51 is modified to N6-(pyridoxal phosphate)lysine. The active-site Nucleophile is Ser78.

This sequence belongs to the ACC deaminase/D-cysteine desulfhydrase family. Homotrimer. Pyridoxal 5'-phosphate is required as a cofactor.

The catalysed reaction is 1-aminocyclopropane-1-carboxylate + H2O = 2-oxobutanoate + NH4(+). Catalyzes a cyclopropane ring-opening reaction, the irreversible conversion of 1-aminocyclopropane-1-carboxylate (ACC) to ammonia and alpha-ketobutyrate. Allows growth on ACC as a nitrogen source. The polypeptide is 1-aminocyclopropane-1-carboxylate deaminase (Variovorax paradoxus).